Consider the following 579-residue polypeptide: Aspartate--tRNA(Asp/Asn) ligase (579 aa).

Glu171 contacts L-aspartate. The tract at residues 195–198 (QLFK) is aspartate. Arg217 serves as a coordination point for L-aspartate. Residues 217-219 (RDE) and Gln226 each bind ATP. His444 is an L-aspartate binding site. Residue Glu475 participates in ATP binding. L-aspartate is bound at residue Arg482. Position 527–530 (527–530 (GLDR)) interacts with ATP.

Belongs to the class-II aminoacyl-tRNA synthetase family. Type 1 subfamily. In terms of assembly, homodimer.

Its subcellular location is the cytoplasm. It catalyses the reaction tRNA(Asx) + L-aspartate + ATP = L-aspartyl-tRNA(Asx) + AMP + diphosphate. Functionally, aspartyl-tRNA synthetase with relaxed tRNA specificity since it is able to aspartylate not only its cognate tRNA(Asp) but also tRNA(Asn). Reaction proceeds in two steps: L-aspartate is first activated by ATP to form Asp-AMP and then transferred to the acceptor end of tRNA(Asp/Asn). The sequence is that of Aspartate--tRNA(Asp/Asn) ligase from Thermotoga neapolitana (strain ATCC 49049 / DSM 4359 / NBRC 107923 / NS-E).